The primary structure comprises 818 residues: Protein LDB19 (818 aa).

A disordered region spans residues 1-25 (MAFSRLTSTHQSNHNGYSNSNKKGQ). The residue at position 93 (Thr93) is a Phosphothreonine. Positions 352–361 (QVKIKESEKS) are enriched in basic and acidic residues. The tract at residues 352 to 374 (QVKIKESEKSKKPRSHIKRYGEL) is disordered. The residue at position 384 (Ser384) is a Phosphoserine. Residues 388 to 436 (MPSQRLPGEPGREQAPNSSGPASTGNVGLDDENPVNEDEEDQPGSEFIH) form a disordered region. A compositionally biased stretch (polar residues) spans 402 to 413 (APNSSGPASTGN). Positions 416–430 (LDDENPVNEDEEDQP) are enriched in acidic residues. A Glycyl lysine isopeptide (Lys-Gly) (interchain with G-Cter in ubiquitin) cross-link involves residue Lys486. Disordered regions lie at residues 568-590 (QPIRKPNSKNKKETNNNTMNVHN) and 607-644 (TPKVRRMGPEDITPVNSNKSNHSTNKEKASNGASNSNI). At Thr619 the chain carries Phosphothreonine. Residues 620 to 629 (PVNSNKSNHS) show a composition bias toward polar residues. Ser808 is subject to Phosphoserine.

The protein belongs to the LDB19 family.

Its subcellular location is the cytoplasm. The protein resides in the golgi apparatus. In terms of biological role, may be involved in protein-linked oligosaccharide phosphorylation since the deletion reduces the negative charge of the cell surface. Involved in the resistance to EDTA, cadmium chloride, cycloheximide, 6-dimethylaminopurine, methyl caffeate, beta-chloro-L-alanine, caffeine and cerulenin. This Saccharomyces cerevisiae (strain ATCC 204508 / S288c) (Baker's yeast) protein is Protein LDB19 (LDB19).